The following is a 270-amino-acid chain: 3-methyl-2-oxobutanoate hydroxymethyltransferase (270 aa).

Mg(2+)-binding residues include D41 and D80. 3-methyl-2-oxobutanoate is bound by residues 41 to 42 (DS), D80, and K109. Residue E111 participates in Mg(2+) binding. Catalysis depends on E178, which acts as the Proton acceptor.

The protein belongs to the PanB family. Homodecamer; pentamer of dimers. It depends on Mg(2+) as a cofactor.

It localises to the cytoplasm. The enzyme catalyses 3-methyl-2-oxobutanoate + (6R)-5,10-methylene-5,6,7,8-tetrahydrofolate + H2O = 2-dehydropantoate + (6S)-5,6,7,8-tetrahydrofolate. It functions in the pathway cofactor biosynthesis; (R)-pantothenate biosynthesis; (R)-pantoate from 3-methyl-2-oxobutanoate: step 1/2. In terms of biological role, catalyzes the reversible reaction in which hydroxymethyl group from 5,10-methylenetetrahydrofolate is transferred onto alpha-ketoisovalerate to form ketopantoate. This is 3-methyl-2-oxobutanoate hydroxymethyltransferase from Thermotoga neapolitana (strain ATCC 49049 / DSM 4359 / NBRC 107923 / NS-E).